The sequence spans 465 residues: Cysteine--tRNA ligase (465 aa).

Residue Cys-29 participates in Zn(2+) binding. A 'HIGH' region motif is present at residues Pro-31–Asn-41. The Zn(2+) site is built by Cys-209, His-234, and Glu-238. The 'KMSKS' region signature appears at Lys-266 to Ser-270. Lys-269 provides a ligand contact to ATP. Phosphoserine is present on Ser-270.

It belongs to the class-I aminoacyl-tRNA synthetase family. As to quaternary structure, monomer. Zn(2+) serves as cofactor.

It localises to the cytoplasm. The catalysed reaction is tRNA(Cys) + L-cysteine + ATP = L-cysteinyl-tRNA(Cys) + AMP + diphosphate. This Bacillus cereus (strain G9842) protein is Cysteine--tRNA ligase.